Consider the following 436-residue polypeptide: Phosphate-repressible acid phosphatase (436 aa).

An N-terminal signal peptide occupies residues 1-20; sequence MKGTAASALLIALSATAAQA. N-linked (GlcNAc...) asparagine glycosylation is found at N227, N283, and N304.

Monomer.

It catalyses the reaction a phosphate monoester + H2O = an alcohol + phosphate. The chain is Phosphate-repressible acid phosphatase (pacA) from Aspergillus niger.